Reading from the N-terminus, the 469-residue chain is MSTSHAAHPDRLLPADPATRDIARRLLTYVEDLPIISPHGHLEASMFVKDEPFADPTTLLISPDHYLTRVLHSAGVDLADLRVGGTEGKTPREAWRIFASNWDLYTGTATGYWVEQEFEHVFGINPDRLSAENADDIYDELSEILARPDFRPRALAEQFNLEILATTDDPLDDLADHKALAQDPTFSPRVLPTFRPDAYTKMYNPGWAEKTTRLIDVAGDGKAGWEGYLQAMRNRRQYFIDHGATSADHGTHDTDTTPLSHEDAQRILDKGLAGTATLAEMRAFEANTTYRFAEMCQDDGLVMTLHPGVYRNHSASAQKKFGNDIGADIPFQLEYTRGLRPLLSDFGENKDFHFVMFTIDETVFSREVAPLAGYYPAAYVGAPWWFIDEIDAMNRFRSLTTGTTGFSRYSGFIDDTRAYCSIPARHNTSRRVEANYLARLVAEHRISETRASEIIVDLIDASPRRVFKL.

Belongs to the metallo-dependent hydrolases superfamily. Uronate isomerase family.

The enzyme catalyses D-glucuronate = D-fructuronate. It carries out the reaction aldehydo-D-galacturonate = keto-D-tagaturonate. It participates in carbohydrate metabolism; pentose and glucuronate interconversion. This Corynebacterium efficiens (strain DSM 44549 / YS-314 / AJ 12310 / JCM 11189 / NBRC 100395) protein is Uronate isomerase.